The sequence spans 316 residues: ATP synthase gamma chain (316 aa).

Belongs to the ATPase gamma chain family. F-type ATPases have 2 components, CF(1) - the catalytic core - and CF(0) - the membrane proton channel. CF(1) has five subunits: alpha(3), beta(3), gamma(1), delta(1), epsilon(1). CF(0) has three main subunits: a, b and c.

It localises to the cellular thylakoid membrane. Functionally, produces ATP from ADP in the presence of a proton gradient across the membrane. The gamma chain is believed to be important in regulating ATPase activity and the flow of protons through the CF(0) complex. This chain is ATP synthase gamma chain, found in Synechococcus sp. (strain WH7803).